The primary structure comprises 484 residues: Phosphomethylpyrimidine synthase (484 aa).

Residues asparagine 97, methionine 126, tyrosine 156, histidine 192, 212–214, 253–256, and glutamate 292 contribute to the substrate site; these read SRG and DSLR. A Zn(2+)-binding site is contributed by histidine 296. Tyrosine 319 is a binding site for substrate. Histidine 360 serves as a coordination point for Zn(2+). Cysteine 440, cysteine 443, and cysteine 448 together coordinate [4Fe-4S] cluster.

This sequence belongs to the ThiC family. [4Fe-4S] cluster is required as a cofactor.

It catalyses the reaction 5-amino-1-(5-phospho-beta-D-ribosyl)imidazole + S-adenosyl-L-methionine = 4-amino-2-methyl-5-(phosphooxymethyl)pyrimidine + CO + 5'-deoxyadenosine + formate + L-methionine + 3 H(+). Its pathway is cofactor biosynthesis; thiamine diphosphate biosynthesis. Its function is as follows. Catalyzes the synthesis of the hydroxymethylpyrimidine phosphate (HMP-P) moiety of thiamine from aminoimidazole ribotide (AIR) in a radical S-adenosyl-L-methionine (SAM)-dependent reaction. This chain is Phosphomethylpyrimidine synthase, found in Synechococcus sp. (strain CC9605).